Consider the following 417-residue polypeptide: Citrate synthase-related protein DDB_G0287281 (417 aa).

Residues 284 to 317 are disordered; the sequence is NKNNNNNNNNNNNNNNNNNNNNNNNNSEDDDDDN. Residues 286–309 are compositionally biased toward low complexity; it reads NNNNNNNNNNNNNNNNNNNNNNNN.

The protein belongs to the citrate synthase family.

In Dictyostelium discoideum (Social amoeba), this protein is Citrate synthase-related protein DDB_G0287281.